The chain runs to 89 residues: Neurotoxin beta-KTx 12 (89 aa).

Residues 1 to 20 form the signal peptide; that stretch reads MKQYIFFLALIVLVSTFAEA. The propeptide occupies 21–39; sequence GKKTEILDKVKKVFSKAKD. The region spanning 53–89 is the BetaSPN-type CS-alpha/beta domain; that stretch reads ELGCPFIDKWCEDHCESKKLVGKCENFDCSCVKLGGK. 3 disulfide bridges follow: Cys-56–Cys-76, Cys-63–Cys-81, and Cys-67–Cys-83.

It belongs to the long chain scorpion toxin family. Class 2 subfamily. As to expression, expressed by the venom gland.

The protein localises to the secreted. In terms of biological role, inhibits voltage-gated potassium channel. The sequence is that of Neurotoxin beta-KTx 12 from Lychas mucronatus (Chinese swimming scorpion).